The following is a 572-amino-acid chain: Na(+)/citrate cotransporter (572 aa).

A run of 8 helical transmembrane segments spans residues serine 13–aspartate 33, valine 53–leucine 73, isoleucine 80–valine 100, leucine 124–alanine 144, serine 218–glycine 238, serine 255–leucine 275, serine 315–phenylalanine 335, and histidine 357–glutamine 377. N-linked (GlcNAc...) asparagine glycosylation is present at asparagine 382. The next 4 membrane-spanning stretches (helical) occupy residues valine 410–threonine 430, proline 443–threonine 463, proline 491–alanine 511, and threonine 532–glycine 552. A glycan (N-linked (GlcNAc...) asparagine) is linked at asparagine 566.

The protein belongs to the SLC13A/DASS transporter (TC 2.A.47) family. NADC subfamily. Homodimer.

The protein localises to the cell membrane. It carries out the reaction citrate(out) + 4 Na(+)(out) = citrate(in) + 4 Na(+)(in). With respect to regulation, inhibited by Li(+). Its function is as follows. High-affinity sodium/citrate cotransporter that mediates citrate entry into cells, which is a critical participant of biochemical pathways. May function in various metabolic processes in which citrate has a critical role such as energy production (Krebs cycle), fatty acid synthesis, cholesterol synthesis, glycolysis, and gluconeogenesis. Transports citrate into the cell in a Na(+)-dependent manner, recognizing the trivalent form of citrate (physiological pH) rather than the divalent form. Can recognizes succinate as a substrate, but its affinity for succinate is several fold lower than for citrate. The stoichiometry is probably 4 Na(+) for each carboxylate, irrespective of whether the translocated substrate is divalent or trivalent, rendering the process electrogenic. Involved in the regulation of citrate levels in the brain. The chain is Na(+)/citrate cotransporter (Slc13a5) from Mus musculus (Mouse).